The chain runs to 134 residues: MHIALIAHDEKKDLMVGFATAYKHLLEPHQLYATGTTGLRIIEATGLTVHRFKSGPLGGDQQIGARISENKMDLVIFLRDPLTAQPHEPDVSALIRLCDVYEIPLATNIGTAEILIRGLGAGFLDWRDLRRNDE.

In terms of domain architecture, MGS-like spans 1-134 (MHIALIAHDE…DWRDLRRNDE (134 aa)). Substrate contacts are provided by residues His8, Lys12, 34–37 (TGTT), and 54–55 (SG). Residue Asp60 is the Proton donor/acceptor of the active site. His87 is a binding site for substrate.

Belongs to the methylglyoxal synthase family.

The enzyme catalyses dihydroxyacetone phosphate = methylglyoxal + phosphate. Functionally, catalyzes the formation of methylglyoxal from dihydroxyacetone phosphate. In Listeria innocua serovar 6a (strain ATCC BAA-680 / CLIP 11262), this protein is Methylglyoxal synthase.